A 385-amino-acid polypeptide reads, in one-letter code: D-alanyl-D-alanine-carboxypeptidase/endopeptidase AmpH (385 aa).

The first 21 residues, 1–21 (MKRSLLFSAVLCAASLTSVHA), serve as a signal peptide directing secretion.

It belongs to the beta-lactamase family.

It localises to the cell inner membrane. With respect to regulation, inhibited by cefmetazole. Functionally, hydrolyzes the cross-linked dimers tetrapentapeptide (D45) and tetratetrapeptide (D44). Removes the terminal D-alanine from muropeptides and disaccharide pentapeptide M5 with a C-terminal D-Ala-D-Ala dipeptide. Associated with recycling and remodeling of peptidoglycan (PG). In Escherichia coli O157:H7, this protein is D-alanyl-D-alanine-carboxypeptidase/endopeptidase AmpH (ampH).